The following is an 86-amino-acid chain: Venom metalloproteinase (86 aa).

Aspartate 7 lines the Ca(2+) pocket. Residue histidine 67 coordinates Zn(2+). Glutamate 68 is an active-site residue. Zn(2+)-binding residues include histidine 71 and histidine 77.

The protein belongs to the venom metalloproteinase (M12B) family. Zn(2+) serves as cofactor. Expressed by the venom gland.

Its subcellular location is the secreted. The protein is Venom metalloproteinase of Tityus serrulatus (Brazilian scorpion).